A 927-amino-acid polypeptide reads, in one-letter code: Dual serine/threonine and tyrosine protein kinase (927 aa).

A disordered region spans residues 1 to 21 (MEADGQSWAGESVSGPGPGGG). Residues 393–429 (RKKENELYESLMNIANRKQEEMKDMIVETLNTMKEEL) adopt a coiled-coil conformation. Residues 650 to 904 (PKLGQELGRG…PLLGIVQPML (255 aa)) form the Protein kinase domain. ATP is bound by residues 656–664 (LGRGQYGVV) and Lys-679. The active-site Proton acceptor is Asp-775.

Belongs to the protein kinase superfamily. Ser/Thr protein kinase family. Expressed in brain, heart, skeletal muscle, kidney and lung. Expressed in maturing tubular epithelia, with the most prominent expression in the medulla and the papilla. Expressed in thin ascending limb of the loop of Henle and the distal convoluted tubule. Expressed in all layers of transitional ureteric epithelium and in the ureteric smooth-muscle cells (at protein level). Widely expressed. Highly expressed in many brain regions, including in cerebellum, olfactory, hippocampus and cerebral cortex.

The protein resides in the cytoplasm. The protein localises to the cell membrane. Its subcellular location is the apical cell membrane. It is found in the basolateral cell membrane. It localises to the cell junction. The catalysed reaction is L-seryl-[protein] + ATP = O-phospho-L-seryl-[protein] + ADP + H(+). It catalyses the reaction L-threonyl-[protein] + ATP = O-phospho-L-threonyl-[protein] + ADP + H(+). It carries out the reaction L-tyrosyl-[protein] + ATP = O-phospho-L-tyrosyl-[protein] + ADP + H(+). In terms of biological role, acts as a positive regulator of ERK phosphorylation downstream of fibroblast growth factor-receptor activation. Involved in the regulation of both caspase-dependent apoptosis and caspase-independent cell death. In the skin, it plays a predominant role in suppressing caspase-dependent apoptosis in response to UV stress in a range of dermal cell types. In Mus musculus (Mouse), this protein is Dual serine/threonine and tyrosine protein kinase (Dstyk).